The sequence spans 406 residues: Vacuole membrane protein 1 (406 aa).

Residues 1–21 are compositionally biased toward basic and acidic residues; it reads MAENGKNCDQRRVAMNKEHHN. Positions 1 to 35 are disordered; sequence MAENGKNCDQRRVAMNKEHHNGNFTDPSSVNEKKR. An N-acetylalanine modification is found at A2. The Cytoplasmic segment spans residues 2–43; that stretch reads AENGKNCDQRRVAMNKEHHNGNFTDPSSVNEKKRREREERQN. Residues 44–64 form a helical membrane-spanning segment; sequence IVLWRQPLITLQYFSLEILVI. Residues 65–77 are Extracellular-facing; it reads LKEWTSKLWHRQS. A helical membrane pass occupies residues 78–98; it reads IVVSFLLLLAVLIATYYVEGV. Over 99–109 the chain is Cytoplasmic; it reads HQQYVQRIEKQ. A helical membrane pass occupies residues 110–130; it reads FLLYAYWIGLGILSSVGLGTG. Over 131–250 the chain is Extracellular; the sequence is LHTFLLYLGP…ASRAKLAVQK (120 aa). The segment at 173–316 is VTT domain; the sequence is GTEGTISLWS…FVIITFSKHI (144 aa). The helical transmembrane segment at 251–271 threads the bilayer; the sequence is LVQKVGFFGILACASIPNPLF. The Cytoplasmic segment spans residues 272 to 273; it reads DL. A helical membrane pass occupies residues 274-294; that stretch reads AGITCGHFLVPFWTFFGATLI. Topologically, residues 295 to 305 are extracellular; the sequence is GKAIIKMHIQK. The chain crosses the membrane as a helical span at residues 306-326; it reads IFVIITFSKHIVEQMVAFIGA. The Cytoplasmic segment spans residues 327–363; the sequence is VPGIGPSLQKPFQEYLEAQRQKLHHKSEMGTPQGENW. A helical transmembrane segment spans residues 364-384; that stretch reads LSWMFEKLVVVMVCYFILSII. The Extracellular segment spans residues 385–406; it reads NSMAQSYAKRIQQRLNSEEKTK.

The protein belongs to the VMP1 family. As to quaternary structure, interacts with BECN1. Interacts with TJP1. Interacts with TP53INP2. Interacts with TMEM41B. Interacts with ATP2A2, PLN and SLN; competes with PLN and SLN to prevent them from forming an inhibitory complex with ATP2A2. Interacts with ATG2A.

The protein resides in the endoplasmic reticulum-Golgi intermediate compartment membrane. The protein localises to the cell membrane. Its subcellular location is the vacuole membrane. It is found in the endoplasmic reticulum membrane. It catalyses the reaction a 1,2-diacyl-sn-glycero-3-phospho-L-serine(in) = a 1,2-diacyl-sn-glycero-3-phospho-L-serine(out). The enzyme catalyses cholesterol(in) = cholesterol(out). It carries out the reaction a 1,2-diacyl-sn-glycero-3-phosphocholine(in) = a 1,2-diacyl-sn-glycero-3-phosphocholine(out). The catalysed reaction is a 1,2-diacyl-sn-glycero-3-phosphoethanolamine(in) = a 1,2-diacyl-sn-glycero-3-phosphoethanolamine(out). Its function is as follows. Phospholipid scramblase involved in lipid homeostasis and membrane dynamics processes. Has phospholipid scramblase activity toward cholesterol and phosphatidylserine, as well as phosphatidylethanolamine and phosphatidylcholine. Required for autophagosome formation: participates in early stages of autophagosome biogenesis at the endoplasmic reticulum (ER) membrane by reequilibrating the leaflets of the ER as lipids are extracted by ATG2 (ATG2A or ATG2B) to mediate autophagosome assembly. Regulates ATP2A2 activity to control ER-isolation membrane contacts for autophagosome formation. In addition to autophagy, involved in other processes in which phospholipid scramblase activity is required. Modulates ER contacts with lipid droplets, mitochondria and endosomes. Plays an essential role in formation of cell junctions. Upon stress such as bacterial and viral infection, promotes formation of cytoplasmic vacuoles followed by cell death. Involved in the cytoplasmic vacuolization of acinar cells during the early stage of acute pancreatitis. (Microbial infection) Host factor required for infection by all flaviviruses tested such as Zika virus and Yellow fever virus. Probably required post-entry of the virus to facilitate the ER membrane remodeling necessary to form replication organelles. In Homo sapiens (Human), this protein is Vacuole membrane protein 1.